Here is a 387-residue protein sequence, read N- to C-terminus: Chaperone protein DnaJ (387 aa).

Positions 4 to 68 (DFYDVLGVSR…EKRQMYDQLG (65 aa)) constitute a J domain. The segment at 76-135 (EKRGGVGGGGNSSGGSARGDPFGGMGGQGSPFGDIFEQFFGGGQGQRRQGNRPRQGQNLQ) is disordered. The span at 80 to 105 (GVGGGGNSSGGSARGDPFGGMGGQGS) shows a compositional bias: gly residues. Residues 121-133 (QRRQGNRPRQGQN) are compositionally biased toward low complexity. The CR-type zinc-finger motif lies at 148-230 (GVEKQFTVRR…CNGDGVTRQE (83 aa)). 8 residues coordinate Zn(2+): Cys161, Cys164, Cys178, Cys181, Cys204, Cys207, Cys218, and Cys221. CXXCXGXG motif repeat units lie at residues 161–168 (CPDCNGRG), 178–185 (CPQCNGQG), 204–211 (CPRCDGSG), and 218–225 (CSTCNGDG).

Belongs to the DnaJ family. Homodimer. Requires Zn(2+) as cofactor.

The protein localises to the cytoplasm. Participates actively in the response to hyperosmotic and heat shock by preventing the aggregation of stress-denatured proteins and by disaggregating proteins, also in an autonomous, DnaK-independent fashion. Unfolded proteins bind initially to DnaJ; upon interaction with the DnaJ-bound protein, DnaK hydrolyzes its bound ATP, resulting in the formation of a stable complex. GrpE releases ADP from DnaK; ATP binding to DnaK triggers the release of the substrate protein, thus completing the reaction cycle. Several rounds of ATP-dependent interactions between DnaJ, DnaK and GrpE are required for fully efficient folding. Also involved, together with DnaK and GrpE, in the DNA replication of plasmids through activation of initiation proteins. The sequence is that of Chaperone protein DnaJ from Haloquadratum walsbyi (strain DSM 16790 / HBSQ001).